A 2293-amino-acid chain; its full sequence is MENIRKLEAQRRKEYLRAETEIRNNNVFEKDILQKFLHIVGKKQRHYTISSKKKEVQDIFNKCSTNPGFTKDVIDLAERILYAPPNLNQIDFAMTIVSLIEMQRHDDLIHKLNELLVRSGMKVISFEFKLCDHFPFTNSILTPDILFEDPYGSRYILEVKVRNKHTDLEHYYMRYKKVVGVHAKVGVFNLSQSGYMQHGDYKLSEKINLESDDFDDILLCVELAGKIREKYIQYPQYFLYTLQSEVTNPDSFLDGFKTRLSDLSMFEEIKSGFGDYWNDITYHMDNYSLIDNHDEVTEDLLNSTDDLTQYCNDLYDEFLDHSQSYSRQGKYGKTILRNSGLDNIIDKKNRSKYTITSKLKPSVYIPITKTIKLDTYGGSRLKFYKDAFINIKCTGDSYSRSAYNLVDNVFNTSSIDLLMTKDDKIDPSLYYEVLDPGFIAHLHDDQVKYKKIAKVTNITSDMTILANNSFSIHCHTDQRLKDNICGYDKKHYDSTQKAKECLDFSNSSLLLPSLGVHLSAIFKSEHHAGVYWNDLVTLGTDNLNHMTSDIPEEAQTKFLEHLYNSHIIFKAIISLNTINSHKFRLLQSPDPGTIIILLPNSDGLKGAPLRYFVVSILQKQDNDSIEANKLLGIYHSHTESKKYKIMLSKVISLDITRLKLLSNSFVKYSLLISYYSQFKKSLKFDTHMLSWMLSQVTTIASLSITDVYKNFIMAIYSDYSNIDDLINDKLECRPRTLGHVFVMKHLFQGITSAVEQLGKINKNKLIADVNDEGELISTGFDPNLRLKLPISQLSTNNPKEIIHESFILFYLGNKGLHGSPQELLNLYYTPMQFESEYTKMMTDCGLYCQELGNNGNLSFSFQAMFLTSKVAYAKLLNNTDEIRRSLVKEMKMDEPIMSIKQFSSTKSMVSNSVPDMSIKDCNLNKNIDVIQLERYIDTSLISDPMKYITLMNNSIESINQERLLIYKDKLNKGIVLLPKLILTTFKGKSFIGLENHYYTKLVSGDYIKQTNTKVFDEFYRLTDEIQEEKLRGFYKGYITEGDLLVRIFNKDQRTTDDREIYTGNAQVRLCLYPLEMTFKSICKKIPEEAITISGDQKQRKLLEQRLALIKTKRQFNKSGYKTEIYSVSSDASKWSARDLLPKFIISIATNPYLTSDEKYFLVYLLVRYYDKKIVLTDSAFSNALRFSREDINGKYEEMTNNFTQNWFNVRSNWLQGNLNMTSSFVHHCSTIMTDTLLSISAKHNGFEAVMTSMVHSDDSTYDFLIAKNSKTSSYINNEANMGRFIISLITYSNKKHCITLNEKKTYISTFYKEFLSTTIVSNELFFFYMADLMPISSDTSYKSPLEDLASYTGYINNSFSHACPIQILKCAITLLNHLTLSTYNMQYTSEKNPRCNIPNSTDLPIQIYPRYKLPLSLAGCIPYYSSDAYNILDDIIKTLEKNKVIKNSLLEDVIDDETLDEYITLVNKQKPEYAKYIQACLLTMDYTQYERDDEDPYNIVDYDLSQKSIINVASINKGSRIKKTYTYKKYLENETDIRLTSCVNPMWCISKPKDEVLIKNPILANYMNPNFKDSLIFSKSALDYGRRIIGSNKSMDTLSSHAFEKEKKQGIKTIYKKLDDKISTVEISKQSLQRFLECIYSVIKKSLVALQVYYSKVQVLVKTRPEFTKVIMPRSVYAEEYGKNSNTSMVENLLVEQYCEIEQVDSKVEKFISFCKHVLQRCGDIKIYRDPEDIDDDFRKYIEFKYTLKDATMGLIQPHQHLAEYAFDVYNNKLIFQGLMVRYYIDICETISNPSYNIPSYTSPNSIIMTLDSLMKRDEISSKIYISHIRTNRFDEYWLSRFGMYVYENYFVKYKLGYRIKIAANEKLMPTMKKVRNLREPFKFICSLVANDPSLFIQMTESPDFQISGWKYSDIIAEMKSTTDFSYNLFLYMMNEINFQTLMRVMNLNRRVWNHWLMKTDSEPSDPNASIALYMYQSTVVKVQTKTIGGGVTFSMLLLRHGMQHRQAFDEISKKIASDYAPQLRIANITPQTSFGRLQFCVNEYGRTVKPGSYRSSCICNVNIAALTDLKPDIAYKENTINQIVTIISPTFEGEFVFKLNTYCDSEYYTCVMLENLDLNRVMILDHLCRGKYLIENPEYFTEISDQITPGACLALFSNNVNNKLWSNTIDTSKFAKLVHIGNYLKTEHEASIVTKLCDSLVAICALNGIDHTLSLKPDNFIKSLRQYKLSYGFHEEFYNNYKKNEREPYTELIMAIASTAGDPFQKVILAIITIFKAYTDLFISYKTDEVEF.

The RdRp catalytic domain maps to 1111 to 1297 (TKRQFNKSGY…LITYSNKKHC (187 aa)).

The catalysed reaction is RNA(n) + a ribonucleoside 5'-triphosphate = RNA(n+1) + diphosphate. In terms of biological role, RNA-dependent RNA polymerase which is responsible for replication and transcription of the viral RNA genome. This chain is RNA-directed RNA polymerase L (RdRp), found in Eriophyes pyri (pearleaf blister mite).